A 123-amino-acid polypeptide reads, in one-letter code: uncharacterized protein (123 aa).

Residues 31–57 show a composition bias toward basic and acidic residues; the sequence is KLRTEAKKSKDKERTKEKEKHESLAKE. The disordered stretch occupies residues 31–58; that stretch reads KLRTEAKKSKDKERTKEKEKHESLAKEK. The chain crosses the membrane as a helical span at residues 91–111; sequence IIIFLLILLVSGLMVGIFFGI.

It localises to the membrane. This is an uncharacterized protein from Mycoplasma genitalium (strain ATCC 33530 / DSM 19775 / NCTC 10195 / G37) (Mycoplasmoides genitalium).